Consider the following 245-residue polypeptide: UPF0246 protein LBUL_1917 (245 aa).

This sequence belongs to the UPF0246 family.

This chain is UPF0246 protein LBUL_1917, found in Lactobacillus delbrueckii subsp. bulgaricus (strain ATCC BAA-365 / Lb-18).